We begin with the raw amino-acid sequence, 117 residues long: Flagellar transcriptional regulator FlhD (117 aa).

This sequence belongs to the FlhD family. In terms of assembly, homodimer; disulfide-linked. Forms a heterohexamer composed of two FlhC and four FlhD subunits. Each FlhC binds a FlhD dimer, forming a heterotrimer, and a hexamer assembles by dimerization of two heterotrimers.

The protein localises to the cytoplasm. Functions in complex with FlhC as a master transcriptional regulator that regulates transcription of several flagellar and non-flagellar operons by binding to their promoter region. Activates expression of class 2 flagellar genes, including fliA, which is a flagellum-specific sigma factor that turns on the class 3 genes. Also regulates genes whose products function in a variety of physiological pathways. The sequence is that of Flagellar transcriptional regulator FlhD from Photorhabdus laumondii subsp. laumondii (strain DSM 15139 / CIP 105565 / TT01) (Photorhabdus luminescens subsp. laumondii).